The primary structure comprises 232 residues: Orotidine 5'-phosphate decarboxylase (232 aa).

Substrate is bound by residues Asp13, Lys35, 62-71, Thr121, Arg182, Gln191, Gly211, and Arg212; that span reads DLKFHDIPNT. The active-site Proton donor is Lys64.

The protein belongs to the OMP decarboxylase family. Type 1 subfamily. In terms of assembly, homodimer.

It catalyses the reaction orotidine 5'-phosphate + H(+) = UMP + CO2. It participates in pyrimidine metabolism; UMP biosynthesis via de novo pathway; UMP from orotate: step 2/2. In terms of biological role, catalyzes the decarboxylation of orotidine 5'-monophosphate (OMP) to uridine 5'-monophosphate (UMP). This Acinetobacter baumannii (strain ACICU) protein is Orotidine 5'-phosphate decarboxylase.